The following is a 485-amino-acid chain: Sphingosine kinase 1 (485 aa).

The 143-residue stretch at 116 to 258 folds into the DAGKc domain; it reads GRPKKLLVFV…LDVATISQGT (143 aa). ATP-binding positions include 126–128 and Thr-158; that span reads NPF. A substrate-binding site is contributed by 183-186; that stretch reads SGDG. Asp-185 functions as the Proton donor/acceptor in the catalytic mechanism. Residues Glu-190 and 215–217 each bind ATP; that span reads GSG. A substrate-binding site is contributed by Asp-276. ATP contacts are provided by residues Arg-283, Arg-289, and 446–448; that span reads DGE.

Mg(2+) is required as a cofactor. As to expression, highly expressed in stems and flowers and at lower levels in roots, leaves and siliques.

It localises to the vacuole membrane. The enzyme catalyses a sphingoid base + ATP = a sphingoid 1-phosphate + ADP + H(+). With respect to regulation, activated by phosphatidic acid (PA). Binding with PA stimulates the activity by promoting the binding of substrate to the catalytic site. In terms of biological role, involved in the production of sphingolipid metabolites. Phosphorylates sphingosine and various sphingoid long-chain base (LCB) products, such as phytosphingosine (PHS, 4-hydroxysphinganine), 4-hydroxy-8-sphingenine, 4,8-sphingadienine, D-erythro-dihydrosphingosine and D,L-threo-dihydrosphingosine. Is required for abscisic acid (ABA) signaling that mediates stomatal closure, inhibition of seed germination and root elongation. May function upstream of PLDALPHA1 and phosphatidic acid (PA) in an amplification response to ABA that mediates stomatal closure. In Arabidopsis thaliana (Mouse-ear cress), this protein is Sphingosine kinase 1 (SPHK1).